Here is a 468-residue protein sequence, read N- to C-terminus: MKVDFDSLNNIFFVGIKGSGVCSLACFLNSKGYFVEGVDVSDKFHTDKILSNNKISYYENIYEFSLKELGRSFDLIVYSSAYDKYGLPALLEAKELNIPILSYSEVLGELSRKYYSVGIAGSHGKTTTTAFLGLLFNKLGLNPNVIVGSSVKDFGDNSAIAGISNIFIAETCEYKKHFLHFSPNMLILTNIDYEHVDFFENYEALEDAFLQYINNLKKNGILIINSDDNNLLKIKRQINRKDINIFSFGSKDLSNFQISNIVVKNEYFCFSFLGLCNVELRTVLFHNVLNFSAALLALNLFLESNGKSIFDFEEAVKKIAKNYSGIKRRVEVVKEKKGVIYMDDYAHHPREIRDTLLGIKDFYKNKRIILDFMPHTFTRTKEFFNDFVEVLSVADILILHNIYLSNRENFNPDELSVKLFLNIKKINKNTYFFKDVKDSVEFIKSLLISGDLFITMGAGNNFILHDFL.

121 to 127 (GSHGKTT) serves as a coordination point for ATP.

It belongs to the MurCDEF family.

It localises to the cytoplasm. The enzyme catalyses UDP-N-acetyl-alpha-D-muramate + L-alanine + ATP = UDP-N-acetyl-alpha-D-muramoyl-L-alanine + ADP + phosphate + H(+). It functions in the pathway cell wall biogenesis; peptidoglycan biosynthesis. In terms of biological role, cell wall formation. The chain is UDP-N-acetylmuramate--L-alanine ligase from Borreliella afzelii (strain PKo) (Borrelia afzelii).